Consider the following 163-residue polypeptide: E1B protein, small T-antigen (163 aa).

Belongs to the adenoviridae E1B 19 kDa protein family.

The protein resides in the host cell membrane. Its subcellular location is the host nucleus envelope. The protein localises to the host nucleus lamina. Functionally, putative adenovirus Bcl-2 homolog that inhibits apoptosis induced by TNF or FAS pathways, as well as p53-mediated apoptosis. Without E1B 19K function, virus production is compromised because of premature death of host cell. Interacts with Bax protein in cell lysates. The protein is E1B protein, small T-antigen of Human adenovirus A serotype 12 (HAdV-12).